Reading from the N-terminus, the 352-residue chain is Gamma-aminobutyric acid-binding protein (352 aa).

Positions 1–28 (MFKSLHQYAHVFSRLSLFGLAFAAAAQA) are cleaved as a signal peptide.

Belongs to the bacterial solute-binding protein 1 family.

It localises to the periplasm. Functionally, binds specifically gamma-aminobutyric acid (GABA) with nanomolar affinity. Does not bind structurally related compounds such as 4-aminovaleric acid, spermidine, histamine and butyric acid. The chain is Gamma-aminobutyric acid-binding protein from Pseudomonas aeruginosa (strain ATCC 15692 / DSM 22644 / CIP 104116 / JCM 14847 / LMG 12228 / 1C / PRS 101 / PAO1).